A 275-amino-acid polypeptide reads, in one-letter code: MCGSFLRRVAAEESRHPTPVGRLLLPALLGLRLVLLAAGGTGVFGGGEEQSEFVCHTQQAGCKAVCYDAFHPLSPLRFWAFQVTLVAVPSALYMGFILYHVIWHWEASEKVKTEEETLSQGEKGGEASRAGSSRLLWAYVAQLGVRLALEGAALGGQYHLYGFRMPSSFVCRLEPCLGSTNCYLSRPSEKSIFLKTMFGVTGLCLLFTLLELVLLGLGRWWRIWRHKSPSSNYSPTSQSAKRCKAPTDNFPVVEIRERPGEAGERGSEVPLSARP.

Residues 1–22 (MCGSFLRRVAAEESRHPTPVGR) lie on the Cytoplasmic side of the membrane. The helical transmembrane segment at 23 to 43 (LLLPALLGLRLVLLAAGGTGV) threads the bilayer. Residues 44–77 (FGGGEEQSEFVCHTQQAGCKAVCYDAFHPLSPLR) lie on the Extracellular side of the membrane. Residues 78–98 (FWAFQVTLVAVPSALYMGFIL) traverse the membrane as a helical segment. The Cytoplasmic portion of the chain corresponds to 99–134 (YHVIWHWEASEKVKTEEETLSQGEKGGEASRAGSSR). A helical membrane pass occupies residues 135-155 (LLWAYVAQLGVRLALEGAALG). At 156 to 196 (GQYHLYGFRMPSSFVCRLEPCLGSTNCYLSRPSEKSIFLKT) the chain is on the extracellular side. A helical transmembrane segment spans residues 197 to 217 (MFGVTGLCLLFTLLELVLLGL). The Cytoplasmic segment spans residues 218 to 275 (GRWWRIWRHKSPSSNYSPTSQSAKRCKAPTDNFPVVEIRERPGEAGERGSEVPLSARP). Positions 254–267 (EIRERPGEAGERGS) are enriched in basic and acidic residues. Residues 254 to 275 (EIRERPGEAGERGSEVPLSARP) form a disordered region.

Belongs to the connexin family. Gamma-type subfamily. In terms of assembly, a connexon is composed of a hexamer of connexins.

It is found in the cell membrane. The protein resides in the cell junction. The protein localises to the gap junction. Functionally, one gap junction consists of a cluster of closely packed pairs of transmembrane channels, the connexons, through which materials of low MW diffuse from one cell to a neighboring cell. In Bos taurus (Bovine), this protein is Gap junction gamma-3 protein (GJC3).